A 170-amino-acid polypeptide reads, in one-letter code: Large ribosomal subunit protein uL10 (170 aa).

Belongs to the universal ribosomal protein uL10 family. As to quaternary structure, part of the ribosomal stalk of the 50S ribosomal subunit. The N-terminus interacts with L11 and the large rRNA to form the base of the stalk. The C-terminus forms an elongated spine to which L12 dimers bind in a sequential fashion forming a multimeric L10(L12)X complex.

In terms of biological role, forms part of the ribosomal stalk, playing a central role in the interaction of the ribosome with GTP-bound translation factors. In Corynebacterium urealyticum (strain ATCC 43042 / DSM 7109), this protein is Large ribosomal subunit protein uL10.